The sequence spans 97 residues: CLAVATA3/ESR (CLE)-related protein ESR2-C (97 aa).

Positions Thr-1 to Tyr-97 are disordered. Residues Pro-47 and Pro-50 each carry the hydroxyproline modification. The O-linked (Ara...) hydroxyproline glycan is linked to Pro-50.

The protein belongs to the CLV3/ESR signal peptide family. The O-glycosylation (arabinosylation) of the hydroxyproline Pro-50 enhances binding affinity of the ESR2Cp peptide for its receptor. In terms of tissue distribution, seed endosperm.

It localises to the secreted. Its subcellular location is the extracellular space. In terms of biological role, extracellular signal peptide that regulates cell fate. The polypeptide is CLAVATA3/ESR (CLE)-related protein ESR2-C (Zea mays (Maize)).